The primary structure comprises 297 residues: Succinate dehydrogenase [ubiquinone] iron-sulfur subunit, mitochondrial (297 aa).

The 2Fe-2S ferredoxin-type domain maps to Lys-47 to Met-140. Residues Cys-100, Cys-105, Cys-108, and Cys-120 each contribute to the [2Fe-2S] cluster site. The region spanning Asp-185–Tyr-215 is the 4Fe-4S ferredoxin-type domain. Residues Cys-195, Cys-198, and Cys-201 each coordinate [4Fe-4S] cluster. Cys-205 is a binding site for [3Fe-4S] cluster. Trp-210 lines the a ubiquinone pocket. The [3Fe-4S] cluster site is built by Cys-252 and Cys-258. A [4Fe-4S] cluster-binding site is contributed by Cys-262.

It belongs to the succinate dehydrogenase/fumarate reductase iron-sulfur protein family. As to quaternary structure, component of complex II composed of four subunits: a flavoprotein (FP), an iron-sulfur protein (IP), and a cytochrome b composed of a large and a small subunit. It depends on [2Fe-2S] cluster as a cofactor. Requires [3Fe-4S] cluster as cofactor. [4Fe-4S] cluster is required as a cofactor. In terms of tissue distribution, most abundant in the adult thorax and low in abdominal tissues.

It is found in the mitochondrion inner membrane. It carries out the reaction a quinone + succinate = fumarate + a quinol. The protein operates within carbohydrate metabolism; tricarboxylic acid cycle; fumarate from succinate (eukaryal route): step 1/1. In terms of biological role, iron-sulfur protein (IP) subunit of succinate dehydrogenase (SDH) that is involved in complex II of the mitochondrial electron transport chain and is responsible for transferring electrons from succinate to ubiquinone (coenzyme Q). The chain is Succinate dehydrogenase [ubiquinone] iron-sulfur subunit, mitochondrial (SdhB) from Drosophila melanogaster (Fruit fly).